Here is a 213-residue protein sequence, read N- to C-terminus: Ras-like protein rasX (213 aa).

16-23 (GDGGVGKT) is a GTP binding site. Residues 38–46 (YDPTIEDSY) carry the Effector region motif. GTP-binding positions include 63–67 (DTAGQ) and 122–125 (NKSD). Cys-210 bears the Cysteine methyl ester mark. Cys-210 carries S-geranylgeranyl cysteine lipidation. Residues 211-213 (KMM) constitute a propeptide, removed in mature form.

The protein belongs to the small GTPase superfamily. Ras family.

Its subcellular location is the cell membrane. The enzyme catalyses GTP + H2O = GDP + phosphate + H(+). Its function is as follows. Ras proteins bind GDP/GTP and possess intrinsic GTPase activity. The sequence is that of Ras-like protein rasX (rasX) from Dictyostelium discoideum (Social amoeba).